Here is a 167-residue protein sequence, read N- to C-terminus: Lipoprotein signal peptidase (167 aa).

Helical transmembrane passes span Leu-10 to Val-30, Trp-68 to Leu-88, and Ser-98 to Leu-118. Active-site residues include Asp-124 and Asp-142. The helical transmembrane segment at Phe-138–Phe-158 threads the bilayer.

It belongs to the peptidase A8 family.

It localises to the cell inner membrane. It carries out the reaction Release of signal peptides from bacterial membrane prolipoproteins. Hydrolyzes -Xaa-Yaa-Zaa-|-(S,diacylglyceryl)Cys-, in which Xaa is hydrophobic (preferably Leu), and Yaa (Ala or Ser) and Zaa (Gly or Ala) have small, neutral side chains.. Its pathway is protein modification; lipoprotein biosynthesis (signal peptide cleavage). This protein specifically catalyzes the removal of signal peptides from prolipoproteins. The polypeptide is Lipoprotein signal peptidase (Xylella fastidiosa (strain 9a5c)).